The sequence spans 400 residues: Laminin subunit B (400 aa).

Laminin EGF-like domains follow at residues 1 to 5 (EGCKP), 6 to 53 (CECD…GCKS), and 54 to 100 (CTCN…QCIP). 8 cysteine pairs are disulfide-bonded: Cys-6-Cys-18, Cys-8-Cys-25, Cys-27-Cys-36, Cys-39-Cys-51, Cys-54-Cys-66, Cys-56-Cys-73, Cys-75-Cys-84, and Cys-87-Cys-98. The tract at residues 101–400 (CGECFDNWDK…AEAKNNAHEA (300 aa)) is domain II and I. Positions 140-235 (KEFEELEQVL…RENALEIQEQ (96 aa)) form a coiled coil. Asn-160, Asn-175, Asn-216, Asn-266, Asn-283, Asn-310, and Asn-356 each carry an N-linked (GlcNAc...) asparagine glycan. The stretch at 353 to 400 (EAKNTSRKAEELIKSKYRSTSSTLSELENSNKQCKQATAEAKNNAHEA) forms a coiled coil. The disordered stretch occupies residues 369-400 (YRSTSSTLSELENSNKQCKQATAEAKNNAHEA). The segment covering 371–383 (STSSTLSELENSN) has biased composition (low complexity).

In terms of assembly, laminin is a complex glycoprotein, consisting of three different polypeptide chains (alpha, beta, gamma), which are bound to each other by disulfide bonds into a cross-shaped molecule comprising one long and three short arms with globules at each end. As to expression, individual glial and muscle cells.

It is found in the secreted. The protein resides in the extracellular space. It localises to the extracellular matrix. Binding to cells via a high affinity receptor, laminin is thought to mediate the attachment, migration and organization of cells into tissues during embryonic development by interacting with other extracellular matrix components. The sequence is that of Laminin subunit B from Hirudo medicinalis (Medicinal leech).